Reading from the N-terminus, the 810-residue chain is MIPVTELRYFADTQPAYRILKPWWDVFTDYISIVMLMIAVFGGTLQVTQDKMICLPCKWVTKDSCNDSFRGWAASSPEPTYPNSTVLPTPDTGPTGIKYDLDRHQYNYVDAVCYENRLHWFAKYFPYLVLLHTLIFLACSNFWFKFPRTSSKLEHFVSILLKCFDSPWTTRALSETVVEESDPKPAFSKMNGSMDKKSSTVSEDVEATVPMLQRTKSRIEQGIVDRSETGVLDKKEGEQAKALFEKVKKFRTHVEEGDIVYRLYMRQTIIKVIKFALIICYTVYYVHNIKFDVDCTVDIESLTGYRTYRCAHPLATLFKILASFYISLVIFYGLICMYTLWWMLRRSLKKYSFESIREESSYSDIPDVKNDFAFMLHLIDQYDPLYSKRFAVFLSEVSENKLRQLNLNNEWTLDKLRQRLTKNAQDKLELHLFMLSGIPDTVFDLVELEVLKLELIPDVTIPPSIAQLTGLKELWLYHTAAKIEAPALAFLRENLRALHIKFTDIKEIPLWIYSLKTLEELHLTGNLSAENNRYIVIDGLRELKRLKVLRLKSNLSKLPQVVTDVGVHLQKLSINNEGTKLIVLNSLKKMVNLTELELIRCDLERIPHSIFSLHNLQEIDLKDNNLKTIEEIISFQHLHRLTCLKLWYNHIAYIPIQIGNLTNLERLYLNRNKIEKIPTQLFYCRKLRYLDLSHNNLTFLPADIGLLQNLQNLAVTANRIEALPPELFQCRKLRALHLGNNVLQSLPSRVGELTNLTQIELRGNRLECLPVELGECPLLKRSGLVVEEDLFSTLPPEVKERLWRADKEQA.

An N-acetylmethionine modification is found at M1. Topologically, residues 1 to 22 (MIPVTELRYFADTQPAYRILKP) are cytoplasmic. A helical membrane pass occupies residues 23 to 47 (WWDVFTDYISIVMLMIAVFGGTLQV). Residues 48–123 (TQDKMICLPC…YENRLHWFAK (76 aa)) are Extracellular-facing. 3 disulfide bridges follow: C54–C310, C57–C65, and C113–C295. N66 and N83 each carry an N-linked (GlcNAc...) asparagine glycan. Residues 124–142 (YFPYLVLLHTLIFLACSNF) form a helical membrane-spanning segment. Residues 143 to 264 (WFKFPRTSSK…EEGDIVYRLY (122 aa)) are Cytoplasmic-facing. Phosphothreonine is present on T200. S202 carries the post-translational modification Phosphoserine. Position 215 is a phosphothreonine (T215). At S217 the chain carries Phosphoserine. Residues 265 to 286 (MRQTIIKVIKFALIICYTVYYV) traverse the membrane as a helical segment. Over 287-316 (HNIKFDVDCTVDIESLTGYRTYRCAHPLAT) the chain is Extracellular. The chain crosses the membrane as a helical span at residues 317–341 (LFKILASFYISLVIFYGLICMYTLW). At 342–810 (WMLRRSLKKY…RLWRADKEQA (469 aa)) the chain is on the cytoplasmic side. LRR repeat units lie at residues 411 to 422 (WTLDKLRQRLTK), 423 to 445 (NAQD…VFDL), 447 to 468 (ELEV…IAQL), 469 to 492 (TGLK…AFLR), 493 to 515 (ENLR…IYSL), 518 to 542 (LEEL…GLRE), 543 to 565 (LKRL…VTDV), 567 to 589 (VHLQ…SLKK), 590 to 613 (MVNL…IFSL), 614 to 637 (HNLQ…SFQH), 639 to 661 (HRLT…IGNL), 662 to 684 (TNLE…LFYC), 686 to 707 (KLRY…IGLL), 708 to 730 (QNLQ…LFQC), 732 to 753 (KLRA…VGEL), 754 to 776 (TNLT…LGEC), and 778 to 801 (LLKR…VKER). The Di-leucine motif signature appears at 706-707 (LL).

Belongs to the LRRC8 family. Heterohexamer; oligomerizes with other LRRC8 proteins (LRRC8B, LRRC8C, LRRC8D and/or LRRC8E) to form a heterohexamer. Can form homohexamers in vitro, but these have lower conductance than heterohexamers. In vivo, the subunit composition may depend primarily on expression levels, and heterooligomeric channels containing various proportions of the different LRRC8 proteins may coexist. Interact with GRB2. Interacts with NOX4; this interaction prevents the ubiquitin-mediated degradation of LRRC8A. Post-translationally, N-glycosylated. In terms of tissue distribution, ubiquitously expressed. High levels detected in the bone marrow; lower levels found in peripheral blood cells. Highly expressed in pancreatic beta cells.

Its subcellular location is the cell membrane. It localises to the lysosome membrane. It carries out the reaction chloride(in) = chloride(out). The catalysed reaction is iodide(out) = iodide(in). The enzyme catalyses taurine(out) = taurine(in). It catalyses the reaction L-aspartate(out) = L-aspartate(in). It carries out the reaction L-glutamate(out) = L-glutamate(in). The catalysed reaction is myo-inositol(out) = myo-inositol(in). The enzyme catalyses 2',3'-cGAMP(out) = 2',3'-cGAMP(in). Inhibited by (4-[(2-butyl-6,7-dichloro-2-cyclopentyl-2,3-dihydro-1-oxo-1H-inden-5-yl)oxy]butanoic acid), which plugs the channel like a cork in a bottle by binding in the extracellular selectivity filter and sterically occluding ion conduction. Lipids may block conduction in closed heterohexameric channels. Its function is as follows. Essential component of the volume-regulated anion channel (VRAC, also named VSOAC channel), an anion channel required to maintain a constant cell volume in response to extracellular or intracellular osmotic changes. The VRAC channel conducts iodide better than chloride and can also conduct organic osmolytes like taurine. Mediates efflux of amino acids, such as aspartate and glutamate, in response to osmotic stress. In complex with LRRC8C or LRRC8E, acts as a transporter of immunoreactive cyclic dinucleotide GMP-AMP (2'-3'-cGAMP), an immune messenger produced in response to DNA virus in the cytosol: mediates both import and export of 2'-3'-cGAMP, thereby promoting transfer of 2'-3'-cGAMP to bystander cells. In contrast, complexes containing LRRC8D inhibit transport of 2'-3'-cGAMP. Required for in vivo channel activity, together with at least one other family member (LRRC8B, LRRC8C, LRRC8D or LRRC8E); channel characteristics depend on the precise subunit composition. Can form functional channels by itself (in vitro). Involved in B-cell development: required for the pro-B cell to pre-B cell transition. Also required for T-cell development. Required for myoblast differentiation: VRAC activity promotes membrane hyperpolarization and regulates insulin-stimulated glucose metabolism and oxygen consumption. Also acts as a regulator of glucose-sensing in pancreatic beta cells: VRAC currents, generated in response to hypotonicity- or glucose-induced beta cell swelling, depolarize cells, thereby causing electrical excitation, leading to increase glucose sensitivity and insulin secretion. Also plays a role in lysosome homeostasis by forming functional lysosomal VRAC channels in response to low cytoplasmic ionic strength condition: lysosomal VRAC channels are necessary for the formation of large lysosome-derived vacuoles, which store and then expel excess water to maintain cytosolic water homeostasis. Acts as a key factor in NLRP3 inflammasome activation by modulating itaconate efflux and mitochondria function. In Mus musculus (Mouse), this protein is Volume-regulated anion channel subunit LRRC8A.